Consider the following 169-residue polypeptide: EP300-interacting inhibitor of differentiation 1 (169 aa).

A disordered region spans residues G31 to P50. Residues R54–Q120 are interaction with NR0B2. The LXCXE motif motif lies at L150–E154.

In terms of assembly, interacts via its LXCXE motif with the entire pocket region of RB1. Interacts with EP300, NR0B2 and TRIM27. In terms of tissue distribution, expressed in all adult tissues examined and during embryogenesis.

Its subcellular location is the nucleus. The protein resides in the cytoplasm. Functionally, interacts with RB1 and EP300 and acts as a repressor of MYOD1 transactivation. Inhibits EP300 and CBP histone acetyltransferase activity. May be involved in coupling cell cycle exit to the transcriptional activation of genes required for cellular differentiation. May act as a candidate coinhibitory factor for NR0B2 that can be directly linked to transcription inhibitory mechanisms. This chain is EP300-interacting inhibitor of differentiation 1, found in Mus musculus (Mouse).